The sequence spans 287 residues: MASSAFAFPSYIITKGASTDSFKSTSLSSSRSLVTDFHLLFSRPISSGPKYQSAKSAKPESPVAINCLTDAKQVCAVGRRKSMMMGLLMSGLIVSQANLPTAFASTPVFREYIDTFDGYSFKYPQNWIQVRGAGADIFFRDPVVLDENLSVEFSSPSSSNYTSLEDLGSPEEVGKRVLRQYLTEFMSTRLGVKRQANILSTSSRVADDGKLYYQVEVNIKSYANNNELAVMPQDRVARLEWNRRYLAVLGVENDRLYSIRLQTPEKVFLEEEKDLRRVMDSFRVEKI.

It belongs to the PsbP family. Partially associated with photosystem I (PSI) complex, but is not a subunit of the complex. Interacts with PsaA and PsaB, but not with PasF.

The protein localises to the plastid. It is found in the chloroplast thylakoid lumen. Functionally, photosystem I assembly factor that assists the proper folding and integration of PsaB and PsaA into the thylakoid membrane. The sequence is that of PsbP domain-containing protein 1, chloroplastic (PPD1) from Arabidopsis thaliana (Mouse-ear cress).